The sequence spans 663 residues: Subtilisin-like serine protease (663 aa).

An N-terminal signal peptide occupies residues 1–23 (MKKFGAVVLALFLVGLMAGSVLA). The propeptide at 24–136 (APQKPAVRNV…IQEDYVVKVA (113 aa)) is removed in mature form. Residues 139–439 (TEGLDESAAQ…AGRVNAYKAA (301 aa)) enclose the Peptidase S8 domain. Catalysis depends on charge relay system residues aspartate 170, histidine 203, and serine 382. Proline 420, isoleucine 423, aspartate 483, leucine 484, aspartate 485, aspartate 497, tyrosine 498, threonine 501, and glutamate 507 together coordinate Ca(2+). The interval 537–565 (VSDGSLGQPSGGGSEPSPSPSPEPTVDEK) is disordered. The propeptide at 563 to 663 (DEKTFTGTVH…YQLDAKVYYG (101 aa)) is removed in mature form.

Belongs to the peptidase S8 family. Monomer.

It carries out the reaction Hydrolysis of proteins with broad specificity for peptide bonds, and a preference for a large uncharged residue in P1. Hydrolyzes peptide amides.. With respect to regulation, resistant to treatment with 5% SDS, 8 M urea, 10% Triton X-100 or 10% Tween-20. Fully active although less stable in the presence of 10 mM EDTA. Activity not affected by the absence or presence of 10 mM CaCl(2). Unstable in the presence of 2 M or over GdnHCl and loses 35% and 99% of its activity upon incubation with 2 and 4 M GdnHCl, respectively, for 1 hour at 55 degrees Celsius. Nearly fully loses activity upon incubation at pH 2.0. Functionally, serine protease with a broad substrate specificity. The sequence is that of Subtilisin-like serine protease from Thermococcus kodakarensis (strain ATCC BAA-918 / JCM 12380 / KOD1) (Pyrococcus kodakaraensis (strain KOD1)).